Reading from the N-terminus, the 200-residue chain is dITP/XTP pyrophosphatase (200 aa).

7-12 (TSNKHK) lines the substrate pocket. Residues Glu-38 and Asp-73 each coordinate Mg(2+). The active-site Proton acceptor is the Asp-73. Substrate-binding positions include Ser-74, 154–157 (FGYD), Lys-177, and 182–183 (HR).

It belongs to the HAM1 NTPase family. Homodimer. Mg(2+) serves as cofactor.

It catalyses the reaction XTP + H2O = XMP + diphosphate + H(+). The catalysed reaction is dITP + H2O = dIMP + diphosphate + H(+). It carries out the reaction ITP + H2O = IMP + diphosphate + H(+). Its function is as follows. Pyrophosphatase that catalyzes the hydrolysis of nucleoside triphosphates to their monophosphate derivatives, with a high preference for the non-canonical purine nucleotides XTP (xanthosine triphosphate), dITP (deoxyinosine triphosphate) and ITP. Seems to function as a house-cleaning enzyme that removes non-canonical purine nucleotides from the nucleotide pool, thus preventing their incorporation into DNA/RNA and avoiding chromosomal lesions. In Campylobacter jejuni subsp. jejuni serotype O:2 (strain ATCC 700819 / NCTC 11168), this protein is dITP/XTP pyrophosphatase.